A 664-amino-acid polypeptide reads, in one-letter code: DNA ligase (664 aa).

NAD(+) contacts are provided by residues 32-36 (DKEYD) and 80-81 (SL). The active-site N6-AMP-lysine intermediate is the K122. NAD(+)-binding residues include R144, E178, and K314. 4 residues coordinate Zn(2+): C407, C410, C423, and C429. The region spanning 587–664 (IDENPFMGKT…NEEEFSNKIK (78 aa)) is the BRCT domain.

Belongs to the NAD-dependent DNA ligase family. LigA subfamily. The cofactor is Mg(2+). Mn(2+) serves as cofactor.

The enzyme catalyses NAD(+) + (deoxyribonucleotide)n-3'-hydroxyl + 5'-phospho-(deoxyribonucleotide)m = (deoxyribonucleotide)n+m + AMP + beta-nicotinamide D-nucleotide.. Its function is as follows. DNA ligase that catalyzes the formation of phosphodiester linkages between 5'-phosphoryl and 3'-hydroxyl groups in double-stranded DNA using NAD as a coenzyme and as the energy source for the reaction. It is essential for DNA replication and repair of damaged DNA. The chain is DNA ligase from Clostridium botulinum (strain Kyoto / Type A2).